We begin with the raw amino-acid sequence, 241 residues long: ATP synthase subunit a (241 aa).

5 helical membrane-spanning segments follow: residues 30 to 50 (GQVF…VLVG), 89 to 109 (LPFI…GALI), 128 to 148 (INTT…AGLS), 193 to 213 (LAVG…VMLL), and 214 to 234 (GLFT…FYIG).

It belongs to the ATPase A chain family. F-type ATPases have 2 components, CF(1) - the catalytic core - and CF(0) - the membrane proton channel. CF(1) has five subunits: alpha(3), beta(3), gamma(1), delta(1), epsilon(1). CF(0) has four main subunits: a, b, b' and c.

Its subcellular location is the cellular thylakoid membrane. Its function is as follows. Key component of the proton channel; it plays a direct role in the translocation of protons across the membrane. The sequence is that of ATP synthase subunit a from Synechococcus sp. (strain CC9902).